We begin with the raw amino-acid sequence, 867 residues long: DNA endonuclease RBBP8 (867 aa).

Residues 25 to 48 (ELWSKLKECHDKELQELLLKINKL) form an essential for binding to the MRN complex and for RPA focus formation on DNA damage region. Coiled coils occupy residues 38-87 (LQEL…EDRL) and 120-141 (ITEL…SEQL). Disordered stretches follow at residues 141–171 (LHNM…PDSP) and 448–486 (RYGK…HSML). Acidic residues predominate over residues 154–166 (ENPADTGEGEDGV). The PXDLS motif motif lies at 489–493 (PLDLS). The interval 508–531 (SSRGRTKQTFALVPEKPDPKKPLH) is damage-recruitment motif. Phosphothreonine occurs at positions 817 and 829. A disordered region spans residues 843-867 (SPCQRPRRRQPYNAKFSSKIKEQKT).

It belongs to the COM1/SAE2/CtIP family. In terms of assembly, homotetramer; formed by antiparallel association of helical extensions protruding from the N-termini of two parallel coiled-coil dimers. Interacts with the MRN complex; the interaction links DNA sensing to resection. Interacts with samhd1. Post-translationally, phosphorylation at Thr-817 and Thr-829 promote interaction with nbn and recruitment to double-strand breaks (DSBs).

Its subcellular location is the nucleus. It is found in the chromosome. In terms of biological role, endonuclease that cooperates with the MRE11-RAD50-NBN (MRN) complex in DNA-end resection, the first step of double-strand break (DSB) repair through the homologous recombination (HR) pathway. Functions downstream of the MRN complex and ATM, promotes ATR activation and its recruitment to DSBs in the S/G2 phase facilitating the generation of ssDNA. Specifically promotes the endonuclease activity of the MRN complex to clear DNA ends containing protein adducts: recruited to DSBs by nbn following phosphorylation, and promotes the endonuclease of mre11 to clear protein-DNA adducts and generate clean double-strand break ends. In Xenopus tropicalis (Western clawed frog), this protein is DNA endonuclease RBBP8 (rbbp8).